A 580-amino-acid chain; its full sequence is Glutamine--tRNA ligase (580 aa).

The 'HIGH' region motif lies at 41 to 51 (PEPNGYLHIGH). ATP contacts are provided by residues 42–44 (EPN) and 48–54 (HIGHAKA). L-glutamine contacts are provided by aspartate 74 and tyrosine 218. Residues threonine 237, 285 to 286 (RL), and 293 to 295 (MSK) contribute to the ATP site. A 'KMSKS' region motif is present at residues 292–296 (VMSKR).

This sequence belongs to the class-I aminoacyl-tRNA synthetase family. Monomer.

The protein localises to the cytoplasm. The enzyme catalyses tRNA(Gln) + L-glutamine + ATP = L-glutaminyl-tRNA(Gln) + AMP + diphosphate. In Xylella fastidiosa (strain 9a5c), this protein is Glutamine--tRNA ligase.